The primary structure comprises 327 residues: Aspartate--ammonia ligase (327 aa).

This sequence belongs to the class-II aminoacyl-tRNA synthetase family. AsnA subfamily.

It is found in the cytoplasm. The catalysed reaction is L-aspartate + NH4(+) + ATP = L-asparagine + AMP + diphosphate + H(+). The protein operates within amino-acid biosynthesis; L-asparagine biosynthesis; L-asparagine from L-aspartate (ammonia route): step 1/1. The sequence is that of Aspartate--ammonia ligase from Bacillus cereus (strain B4264).